We begin with the raw amino-acid sequence, 227 residues long: Cytochrome c oxidase subunit 2 (227 aa).

Topologically, residues 1–14 (MAYPFQLGLQDATS) are mitochondrial intermembrane. A helical membrane pass occupies residues 15-45 (PIMEELLHFHDHTLMIVFLISSLVLYIITLM). Over 46–59 (LTTKLTHTSTMDAQ) the chain is Mitochondrial matrix. Residues 60 to 87 (EVETVWTILPAIILILIALPSLRILYMM) form a helical membrane-spanning segment. Residues 88–227 (DEINNPSLTV…YFETWSALMV (140 aa)) are Mitochondrial intermembrane-facing. Cu cation is bound by residues His161, Cys196, Glu198, Cys200, His204, and Met207. A Mg(2+)-binding site is contributed by Glu198. The residue at position 218 (Tyr218) is a Phosphotyrosine.

It belongs to the cytochrome c oxidase subunit 2 family. In terms of assembly, component of the cytochrome c oxidase (complex IV, CIV), a multisubunit enzyme composed of 14 subunits. The complex is composed of a catalytic core of 3 subunits MT-CO1, MT-CO2 and MT-CO3, encoded in the mitochondrial DNA, and 11 supernumerary subunits COX4I, COX5A, COX5B, COX6A, COX6B, COX6C, COX7A, COX7B, COX7C, COX8 and NDUFA4, which are encoded in the nuclear genome. The complex exists as a monomer or a dimer and forms supercomplexes (SCs) in the inner mitochondrial membrane with NADH-ubiquinone oxidoreductase (complex I, CI) and ubiquinol-cytochrome c oxidoreductase (cytochrome b-c1 complex, complex III, CIII), resulting in different assemblies (supercomplex SCI(1)III(2)IV(1) and megacomplex MCI(2)III(2)IV(2)). Found in a complex with TMEM177, COA6, COX18, COX20, SCO1 and SCO2. Interacts with TMEM177 in a COX20-dependent manner. Interacts with COX20. Interacts with COX16. Cu cation is required as a cofactor.

Its subcellular location is the mitochondrion inner membrane. It carries out the reaction 4 Fe(II)-[cytochrome c] + O2 + 8 H(+)(in) = 4 Fe(III)-[cytochrome c] + 2 H2O + 4 H(+)(out). Its function is as follows. Component of the cytochrome c oxidase, the last enzyme in the mitochondrial electron transport chain which drives oxidative phosphorylation. The respiratory chain contains 3 multisubunit complexes succinate dehydrogenase (complex II, CII), ubiquinol-cytochrome c oxidoreductase (cytochrome b-c1 complex, complex III, CIII) and cytochrome c oxidase (complex IV, CIV), that cooperate to transfer electrons derived from NADH and succinate to molecular oxygen, creating an electrochemical gradient over the inner membrane that drives transmembrane transport and the ATP synthase. Cytochrome c oxidase is the component of the respiratory chain that catalyzes the reduction of oxygen to water. Electrons originating from reduced cytochrome c in the intermembrane space (IMS) are transferred via the dinuclear copper A center (CU(A)) of subunit 2 and heme A of subunit 1 to the active site in subunit 1, a binuclear center (BNC) formed by heme A3 and copper B (CU(B)). The BNC reduces molecular oxygen to 2 water molecules using 4 electrons from cytochrome c in the IMS and 4 protons from the mitochondrial matrix. The polypeptide is Cytochrome c oxidase subunit 2 (MT-CO2) (Vulpes macrotis (Kit fox)).